The chain runs to 406 residues: Acetylornithine aminotransferase (406 aa).

Pyridoxal 5'-phosphate-binding positions include 113-114 and F145; that span reads GT. R148 contributes to the N(2)-acetyl-L-ornithine binding site. 233-236 provides a ligand contact to pyridoxal 5'-phosphate; sequence DEIQ. An N6-(pyridoxal phosphate)lysine modification is found at K262. S290 contributes to the N(2)-acetyl-L-ornithine binding site. Residue T291 participates in pyridoxal 5'-phosphate binding.

This sequence belongs to the class-III pyridoxal-phosphate-dependent aminotransferase family. ArgD subfamily. Homodimer. Pyridoxal 5'-phosphate is required as a cofactor.

It localises to the cytoplasm. It carries out the reaction N(2)-acetyl-L-ornithine + 2-oxoglutarate = N-acetyl-L-glutamate 5-semialdehyde + L-glutamate. The protein operates within amino-acid biosynthesis; L-arginine biosynthesis; N(2)-acetyl-L-ornithine from L-glutamate: step 4/4. This Leptospira interrogans serogroup Icterohaemorrhagiae serovar Lai (strain 56601) protein is Acetylornithine aminotransferase.